The chain runs to 397 residues: P2X purinoceptor 3 (397 aa).

Residues 1–20 lie on the Cytoplasmic side of the membrane; sequence MNCISDFFTYETTKSVVVKS. Residues 21 to 43 traverse the membrane as a helical segment; it reads WTIGIINRVVQLLIISYFVGWVF. Over 44 to 322 the chain is Extracellular; that stretch reads LHEKAYQVRD…AGKFNIIPTI (279 aa). Lysine 63 and lysine 65 together coordinate ATP. Intrachain disulfides connect cysteine 107–cysteine 153, cysteine 116–cysteine 137, and cysteine 122–cysteine 147. Mg(2+) is bound at residue glutamate 111. Asparagine 139 carries N-linked (GlcNAc...) asparagine glycosylation. Position 158 (aspartate 158) interacts with Mg(2+). Aspartate 158 serves as a coordination point for Ca(2+). N-linked (GlcNAc...) asparagine glycosylation is present at asparagine 170. Threonine 172 is an ATP binding site. N-linked (GlcNAc...) asparagine glycosylation occurs at asparagine 194. 2 cysteine pairs are disulfide-bonded: cysteine 203–cysteine 213 and cysteine 247–cysteine 256. Serine 275, asparagine 279, and arginine 281 together coordinate ATP. The N-linked (GlcNAc...) asparagine glycan is linked to asparagine 290. Residue lysine 299 participates in ATP binding. Residues 323–341 form a helical membrane-spanning segment; sequence ISSVAAFTSVGVGTVLCDI. Over 342–397 the chain is Cytoplasmic; it reads ILLNFLKGADQYKAKKFEEVNETTLKIAALTNPVYPSDQTTAEKQSTDSGAFSIGH. Over residues 378–391 the composition is skewed to polar residues; the sequence is SDQTTAEKQSTDSG. The segment at 378 to 397 is disordered; it reads SDQTTAEKQSTDSGAFSIGH.

Belongs to the P2X receptor family. In terms of assembly, homotrimer. Forms heterotrimer with P2RX2. Heterotrimeric P2RX2/3 has a ligand dose-response profile that is distinct from either homotrimeric P2RX2 or P2RX3.

The protein resides in the cell membrane. It carries out the reaction Ca(2+)(in) = Ca(2+)(out). It catalyses the reaction Na(+)(in) = Na(+)(out). Has high sensitivity to ATP. Fast activation by external ATP. Exhibits rapid desensitization. Sensitives to the ATP agonist:alpha/beta-methylene-ATP. Subject to allosteric inhibition by AF-219. Mg(2+) and Ca(2+) slow deactivation of P2RX3. In terms of biological role, extracellular ATP-activated non-selective cation channel. Plays particularly important role in sensory neurons where its activation is critical for gustatory, nociceptive responses, visceral reflexes and sensory hypersensitization. The sequence is that of P2X purinoceptor 3 (P2RX3) from Homo sapiens (Human).